The sequence spans 398 residues: Probable peptidoglycan glycosyltransferase FtsW (398 aa).

The Cytoplasmic segment spans residues 1 to 25 (MCYGGTAMMAFADIKEALTPKPSAQ). A helical membrane pass occupies residues 26–46 (LYDVPLLYCMLMLMGVGFVMV). The Periplasmic portion of the chain corresponds to 47–69 (TSASMPTADRLFGNIYHFTIRHG). The chain crosses the membrane as a helical span at residues 70 to 90 (IFLALSFCLFWITTSVPMSWW). Position 91 (Lys-91) is a topological domain, cytoplasmic. Residues 92–112 (KANPYLLLVGLGLLLIVLIVG) traverse the membrane as a helical segment. Topologically, residues 113 to 120 (REVNGSTR) are periplasmic. A helical membrane pass occupies residues 121–141 (WIPIGPFNIQASELAKLFFFS). Residues 142 to 156 (YISGYLVRKRSEVQE) lie on the Cytoplasmic side of the membrane. A helical transmembrane segment spans residues 157 to 177 (NIKGFIKPILVFAAYAGLILM). At 178–179 (QP) the chain is on the periplasmic side. A helical transmembrane segment spans residues 180-200 (DLGTVVVMFVTTVGLLFLAGA). Residue Lys-201 is a topological domain, cytoplasmic. The chain crosses the membrane as a helical span at residues 202 to 222 (LWQFFVLILTGVALVIGLIVL). At 223–289 (EPYRMARVIG…DFIFAVIAEE (67 aa)) the chain is on the periplasmic side. A helical membrane pass occupies residues 290 to 312 (LGFVGVSSILIVLGTLVFRALLI). Residues 313-324 (GQNALKNGKEYE) lie on the Cytoplasmic side of the membrane. Residues 325–345 (GYLALAIGIWFAFQTMVNVGA) form a helical membrane-spanning segment. The Periplasmic portion of the chain corresponds to 346 to 356 (SAGILPTKGLT). The helical transmembrane segment at 357–377 (LPFISYGGSSLLMMTIAAGIL) threads the bilayer. At 378-398 (LRVDFETKMATKQATSGGAKR) the chain is on the cytoplasmic side.

Belongs to the SEDS family. FtsW subfamily.

It localises to the cell inner membrane. The catalysed reaction is [GlcNAc-(1-&gt;4)-Mur2Ac(oyl-L-Ala-gamma-D-Glu-L-Lys-D-Ala-D-Ala)](n)-di-trans,octa-cis-undecaprenyl diphosphate + beta-D-GlcNAc-(1-&gt;4)-Mur2Ac(oyl-L-Ala-gamma-D-Glu-L-Lys-D-Ala-D-Ala)-di-trans,octa-cis-undecaprenyl diphosphate = [GlcNAc-(1-&gt;4)-Mur2Ac(oyl-L-Ala-gamma-D-Glu-L-Lys-D-Ala-D-Ala)](n+1)-di-trans,octa-cis-undecaprenyl diphosphate + di-trans,octa-cis-undecaprenyl diphosphate + H(+). Its pathway is cell wall biogenesis; peptidoglycan biosynthesis. Its function is as follows. Peptidoglycan polymerase that is essential for cell division. This is Probable peptidoglycan glycosyltransferase FtsW from Pseudoalteromonas translucida (strain TAC 125).